Reading from the N-terminus, the 245-residue chain is 1-(5-phosphoribosyl)-5-[(5-phosphoribosylamino)methylideneamino] imidazole-4-carboxamide isomerase (245 aa).

D8 serves as the catalytic Proton acceptor. The active-site Proton donor is the D130.

Belongs to the HisA/HisF family.

The protein localises to the cytoplasm. The enzyme catalyses 1-(5-phospho-beta-D-ribosyl)-5-[(5-phospho-beta-D-ribosylamino)methylideneamino]imidazole-4-carboxamide = 5-[(5-phospho-1-deoxy-D-ribulos-1-ylimino)methylamino]-1-(5-phospho-beta-D-ribosyl)imidazole-4-carboxamide. The protein operates within amino-acid biosynthesis; L-histidine biosynthesis; L-histidine from 5-phospho-alpha-D-ribose 1-diphosphate: step 4/9. In Pseudomonas putida (strain ATCC 700007 / DSM 6899 / JCM 31910 / BCRC 17059 / LMG 24140 / F1), this protein is 1-(5-phosphoribosyl)-5-[(5-phosphoribosylamino)methylideneamino] imidazole-4-carboxamide isomerase.